Here is a 323-residue protein sequence, read N- to C-terminus: Large ribosomal subunit protein uL10x (323 aa).

Positions 287–323 are disordered; sequence DAGGGSAQAGAAAKVEEKKEESDEEDYEGGFGLFDEE. Phosphoserine is present on Ser-308. Positions 308-323 are enriched in acidic residues; the sequence is SDEEDYEGGFGLFDEE. Tyr-313 carries the phosphotyrosine modification.

Belongs to the universal ribosomal protein uL10 family. In terms of assembly, P0 forms a pentameric complex by interaction with dimers of P1 and P2.

In terms of biological role, ribosomal protein P0 is the functional equivalent of E.coli protein L10. The protein is Large ribosomal subunit protein uL10x (RPP0C) of Arabidopsis thaliana (Mouse-ear cress).